A 386-amino-acid chain; its full sequence is uncharacterized protein (386 aa).

The next 9 helical transmembrane spans lie at 48 to 68, 78 to 98, 136 to 156, 171 to 191, 213 to 233, 253 to 273, 285 to 305, 316 to 336, and 344 to 364; these read NLITLIGLGFVVINILTMLVY, PSWVYASWAIGLFLYQSFDAI, LQLDMFSSILTQFASLLYFYI, YFSGPVEGIVMVIGLFALTAI, FLPYYTYGSCLYNFMAFALLL, VIKALSGILPYFLQWMAVFSL, FLTIFCLNAFIFAYSVGVVIV, WNVLILPFLVDAVDAYTFGVL, and FFCYVGICIGVYGNFVAHVIA.

This sequence belongs to the CDP-alcohol phosphatidyltransferase class-I family.

The protein localises to the membrane. This is an uncharacterized protein from Schizosaccharomyces pombe (strain 972 / ATCC 24843) (Fission yeast).